A 341-amino-acid chain; its full sequence is N-(sulfonatooxy)alkenimidothioic acid sulfate-lyase (epithionitrile-forming) (341 aa).

Positions 1 to 24 (MAPTLQGQWIKVGQKGGTGPGPRS) are disordered. Kelch repeat units follow at residues 34 to 82 (KLYS…VRMV), 87 to 133 (KIYI…FHSM), 139 to 194 (HVYV…VVQG), and 203 to 249 (ATSI…AHAV). The a (Z)-N-(sulfonatooxy)alkanimidothioate site is built by Lys46, Arg94, Thr129, Phe130, Arg157, Gly186, Lys211, and Val244. Residue Arg94 is the Proton donor of the active site. Arg157 acts as the Proton donor in catalysis. Residues Glu260, Asp264, and His268 each contribute to the Fe(2+) site. Residue Trp303 coordinates a (Z)-N-(sulfonatooxy)alkanimidothioate.

Homodimer. Interacts with WRKY53. Fe(2+) is required as a cofactor. In terms of tissue distribution, expressed in epidermal cells of all above-ground organs except the anthers, in cambial cells of leaf and stem vascular bundles, and in glucosinolates rich S-cells found in stems just below the inflorescence. Absent from roots.

The protein localises to the cytoplasm. Its subcellular location is the nucleus. The catalysed reaction is a (Z)-N-(sulfonatooxy)alkenimidothioate = an epithionitrile + sulfate. It carries out the reaction a (Z)-N-(sulfonatooxy)alkanimidothioate = a nitrile + sulfur + sulfate. It catalyses the reaction (Z)-(indol-3-yl)-N-(sulfonatooxy)methanimidothioate = (indol-3-yl)acetonitrile + sulfur + sulfate. Not dependent on the presence of Fe(2+) although supplemental Fe(2+) increases nitriles formation. Specifier protein that contributes to constitutive and herbivore-induced simple nitrile formation. Converts glucosinolates both to epithionitriles and to simple nitriles in the presence of myrosinase. Promotes the formation of epithionitriles after hydrolysis of alkenylglucosinolates containing a terminal double bond. Mediates indol-3-ylacetonitrile (IACN) production from indol-3-ylmethylglucosinolate (glucobrassicin). Triggers the production of 3,4-epithiobutylnitrile from 2-propenylisothiocyanate, product of 2-propenylglucosinolate (sinigrin) catalysis by myrosinase. Seems inactive toward benzylglucosinolate (glucotropaeolin). Acts as a negative regulator of senescence. This is N-(sulfonatooxy)alkenimidothioic acid sulfate-lyase (epithionitrile-forming) from Arabidopsis thaliana (Mouse-ear cress).